Reading from the N-terminus, the 702-residue chain is Elongation factor G (702 aa).

A tr-type G domain is found at 8-286 (DKVRNIGIIA…AVVEYLPSPL (279 aa)). GTP contacts are provided by residues 17-24 (AHIDAGKT), 85-89 (DTPGH), and 139-142 (NKMD).

This sequence belongs to the TRAFAC class translation factor GTPase superfamily. Classic translation factor GTPase family. EF-G/EF-2 subfamily.

It is found in the cytoplasm. Functionally, catalyzes the GTP-dependent ribosomal translocation step during translation elongation. During this step, the ribosome changes from the pre-translocational (PRE) to the post-translocational (POST) state as the newly formed A-site-bound peptidyl-tRNA and P-site-bound deacylated tRNA move to the P and E sites, respectively. Catalyzes the coordinated movement of the two tRNA molecules, the mRNA and conformational changes in the ribosome. This chain is Elongation factor G, found in Chloroflexus aggregans (strain MD-66 / DSM 9485).